The following is a 209-amino-acid chain: Large ribosomal subunit protein uL4 (209 aa).

Residues 45–78 (RQGTHKAKERAEVAGSTRKIKKQKGTGTARAGSA) are disordered.

The protein belongs to the universal ribosomal protein uL4 family. As to quaternary structure, part of the 50S ribosomal subunit.

In terms of biological role, one of the primary rRNA binding proteins, this protein initially binds near the 5'-end of the 23S rRNA. It is important during the early stages of 50S assembly. It makes multiple contacts with different domains of the 23S rRNA in the assembled 50S subunit and ribosome. Forms part of the polypeptide exit tunnel. This chain is Large ribosomal subunit protein uL4, found in Flavobacterium psychrophilum (strain ATCC 49511 / DSM 21280 / CIP 103535 / JIP02/86).